The chain runs to 520 residues: Cyclic GMP-AMP synthase-like receptor (520 aa).

ATP is bound by residues Ser-68 and 80–82 (EFD). Residues Glu-80, Asp-82, and Asp-198 each coordinate Mg(2+). Residue Asp-198 coordinates GTP. Lys-264 serves as a coordination point for ATP. Mn(2+) is bound by residues Leu-288 and Asp-294.

Belongs to the mab-21 family. The cofactor is Mg(2+). Requires Mn(2+) as cofactor.

It carries out the reaction GTP + ATP = 2',3'-cGAMP + 2 diphosphate. The catalysed reaction is GTP + ATP = pppGp(2'-5')A + diphosphate. It catalyses the reaction pppGp(2'-5')A = 2',3'-cGAMP + diphosphate. Its function is as follows. Nucleotidyltransferase that catalyzes the formation of cyclic GMP-AMP (2',3'-cGAMP) from ATP and GTP and plays a key role in innate immunity. Acts as a key sensor of double-stranded RNA (dsRNA), the presence of dsRNA in the cytoplasm being a danger signal that triggers the immune responses. Directly binds dsRNA, activating the nucleotidyltransferase activity, leading to synthesis of 2',3'-cGAMP, a second messenger that binds to and activates Sting, thereby triggering the immune response via activation of the NF-kappa-B transcription factor. This chain is Cyclic GMP-AMP synthase-like receptor, found in Microplitis demolitor (Parasitoid wasp).